The primary structure comprises 162 residues: 2-C-methyl-D-erythritol 2,4-cyclodiphosphate synthase (162 aa).

A divalent metal cation contacts are provided by D10 and H12. Residues 10-12 and 36-37 contribute to the 4-CDP-2-C-methyl-D-erythritol 2-phosphate site; these read DVH and HS. H44 serves as a coordination point for a divalent metal cation. Residues 58–60, 63–67, and R144 each bind 4-CDP-2-C-methyl-D-erythritol 2-phosphate; these read DIG and FSDTD.

It belongs to the IspF family. Homotrimer. The cofactor is a divalent metal cation.

The catalysed reaction is 4-CDP-2-C-methyl-D-erythritol 2-phosphate = 2-C-methyl-D-erythritol 2,4-cyclic diphosphate + CMP. The protein operates within isoprenoid biosynthesis; isopentenyl diphosphate biosynthesis via DXP pathway; isopentenyl diphosphate from 1-deoxy-D-xylulose 5-phosphate: step 4/6. Involved in the biosynthesis of isopentenyl diphosphate (IPP) and dimethylallyl diphosphate (DMAPP), two major building blocks of isoprenoid compounds. Catalyzes the conversion of 4-diphosphocytidyl-2-C-methyl-D-erythritol 2-phosphate (CDP-ME2P) to 2-C-methyl-D-erythritol 2,4-cyclodiphosphate (ME-CPP) with a corresponding release of cytidine 5-monophosphate (CMP). This chain is 2-C-methyl-D-erythritol 2,4-cyclodiphosphate synthase, found in Burkholderia mallei (strain NCTC 10247).